The primary structure comprises 493 residues: Cobyric acid synthase (493 aa).

The 195-residue stretch at 261-455 (HTRIAVVAYP…LHGLFEDAAV (195 aa)) folds into the GATase cobBQ-type domain. Catalysis depends on Cys342, which acts as the Nucleophile. His447 is an active-site residue.

This sequence belongs to the CobB/CobQ family. CobQ subfamily.

Its pathway is cofactor biosynthesis; adenosylcobalamin biosynthesis. Its function is as follows. Catalyzes amidations at positions B, D, E, and G on adenosylcobyrinic A,C-diamide. NH(2) groups are provided by glutamine, and one molecule of ATP is hydrogenolyzed for each amidation. The protein is Cobyric acid synthase of Acidovorax sp. (strain JS42).